Reading from the N-terminus, the 411-residue chain is Citrate synthase (411 aa).

Residues histidine 304 and aspartate 363 contribute to the active site.

This sequence belongs to the citrate synthase family.

The catalysed reaction is oxaloacetate + acetyl-CoA + H2O = citrate + CoA + H(+). It participates in carbohydrate metabolism; tricarboxylic acid cycle; isocitrate from oxaloacetate: step 1/2. This Rickettsia helvetica protein is Citrate synthase (gltA).